The sequence spans 370 residues: 3-dehydroquinate synthase (370 aa).

NAD(+) is bound by residues 108–112 (GVVGD), 132–133 (TT), K145, and K154. Zn(2+)-binding residues include E187, H250, and H268.

Belongs to the sugar phosphate cyclases superfamily. Dehydroquinate synthase family. The cofactor is Co(2+). It depends on Zn(2+) as a cofactor. Requires NAD(+) as cofactor.

The protein localises to the cytoplasm. The catalysed reaction is 7-phospho-2-dehydro-3-deoxy-D-arabino-heptonate = 3-dehydroquinate + phosphate. The protein operates within metabolic intermediate biosynthesis; chorismate biosynthesis; chorismate from D-erythrose 4-phosphate and phosphoenolpyruvate: step 2/7. In terms of biological role, catalyzes the conversion of 3-deoxy-D-arabino-heptulosonate 7-phosphate (DAHP) to dehydroquinate (DHQ). The sequence is that of 3-dehydroquinate synthase from Caulobacter vibrioides (strain NA1000 / CB15N) (Caulobacter crescentus).